Here is a 146-residue protein sequence, read N- to C-terminus: Cyanate hydratase (146 aa).

Residues R87, E90, and S113 contribute to the active site.

This sequence belongs to the cyanase family.

The catalysed reaction is cyanate + hydrogencarbonate + 3 H(+) = NH4(+) + 2 CO2. In terms of biological role, catalyzes the reaction of cyanate with bicarbonate to produce ammonia and carbon dioxide. The protein is Cyanate hydratase of Pseudomonas putida (strain ATCC 700007 / DSM 6899 / JCM 31910 / BCRC 17059 / LMG 24140 / F1).